A 302-amino-acid chain; its full sequence is Probable alpha-L-glutamate ligase 1 (302 aa).

An ATP-grasp domain is found at 104–287 (MQLLSRKGIG…VANMIIEFIE (184 aa)). Residues lysine 141, 178–179 (EY), aspartate 187, and 211–213 (RSN) contribute to the ATP site. Residues aspartate 248, glutamate 260, and asparagine 262 each contribute to the Mg(2+) site. 3 residues coordinate Mn(2+): aspartate 248, glutamate 260, and asparagine 262.

This sequence belongs to the RimK family. It depends on Mg(2+) as a cofactor. Requires Mn(2+) as cofactor.

This chain is Probable alpha-L-glutamate ligase 1, found in Pseudoalteromonas atlantica (strain T6c / ATCC BAA-1087).